Here is a 307-residue protein sequence, read N- to C-terminus: Acyl transferase (307 aa).

Residues Ser116, Asp213, and His243 each act as charge relay system in the active site.

It belongs to the LuxD family.

It functions in the pathway lipid metabolism; fatty acid reduction for biolumincescence. Functionally, acyl transferase is part of the fatty acid reductase system required for aldehyde biosynthesis; it produces fatty acids for the luminescent reaction. The protein is Acyl transferase of Aliivibrio fischeri (Vibrio fischeri).